We begin with the raw amino-acid sequence, 197 residues long: Small ribosomal subunit protein uS4 (197 aa).

The region spanning 87-147 (SRIDNVIFRL…ESKKNTQRMK (61 aa)) is the S4 RNA-binding domain.

It belongs to the universal ribosomal protein uS4 family. As to quaternary structure, part of the 30S ribosomal subunit. Contacts protein S5. The interaction surface between S4 and S5 is involved in control of translational fidelity.

Its function is as follows. One of the primary rRNA binding proteins, it binds directly to 16S rRNA where it nucleates assembly of the body of the 30S subunit. In terms of biological role, with S5 and S12 plays an important role in translational accuracy. This Agathobacter rectalis (strain ATCC 33656 / DSM 3377 / JCM 17463 / KCTC 5835 / VPI 0990) (Eubacterium rectale) protein is Small ribosomal subunit protein uS4.